Here is a 151-residue protein sequence, read N- to C-terminus: Small ribosomal subunit protein eS6 (151 aa).

This sequence belongs to the eukaryotic ribosomal protein eS6 family.

The chain is Small ribosomal subunit protein eS6 from Pyrobaculum calidifontis (strain DSM 21063 / JCM 11548 / VA1).